Reading from the N-terminus, the 321-residue chain is Gap junction delta-2 protein (321 aa).

Over Met-1–Ser-19 the chain is Cytoplasmic. Residues Thr-20–Gly-42 form a helical membrane-spanning segment. The Extracellular portion of the chain corresponds to Glu-43–His-75. Residues Ile-76–Val-98 traverse the membrane as a helical segment. The Cytoplasmic portion of the chain corresponds to His-99–Arg-197. Residues Asp-117–Glu-141 are disordered. Residues Gly-125–Gly-137 show a composition bias toward gly residues. Residues Phe-198 to Leu-220 form a helical membrane-spanning segment. The Extracellular segment spans residues Tyr-221–Val-252. A helical membrane pass occupies residues Phe-253–Leu-275. Topologically, residues Gly-276–Val-321 are cytoplasmic.

The protein belongs to the connexin family. Delta-type subfamily. In terms of assembly, a connexon is composed of a hexamer of connexins.

It localises to the cell membrane. The protein localises to the cell junction. The protein resides in the gap junction. One gap junction consists of a cluster of closely packed pairs of transmembrane channels, the connexons, through which materials of low MW diffuse from one cell to a neighboring cell. The chain is Gap junction delta-2 protein (GJD2) from Bos taurus (Bovine).